A 679-amino-acid chain; its full sequence is Glycine--tRNA ligase beta subunit (679 aa).

This sequence belongs to the class-II aminoacyl-tRNA synthetase family. As to quaternary structure, tetramer of two alpha and two beta subunits.

The protein localises to the cytoplasm. The enzyme catalyses tRNA(Gly) + glycine + ATP = glycyl-tRNA(Gly) + AMP + diphosphate. The protein is Glycine--tRNA ligase beta subunit of Streptococcus agalactiae serotype III (strain NEM316).